The following is an 834-amino-acid chain: Putative COX1/OXI3 intron 1 protein (834 aa).

The tract at residues 162 to 188 (MKDTNNTKGNTKSEGSTERGNSGVDRG) is disordered. The segment covering 167 to 181 (NTKGNTKSEGSTERG) has biased composition (polar residues). A Reverse transcriptase domain is found at 296–577 (LSNELGTGKF…TPARFLGYNI (282 aa)).

It is found in the mitochondrion. The sequence is that of Putative COX1/OXI3 intron 1 protein (AI1) from Saccharomyces cerevisiae (strain ATCC 204508 / S288c) (Baker's yeast).